Consider the following 270-residue polypeptide: MLRKVFYISDGTAITAEVFGHAVLSQFPLEFDALTIPFVETEAKAEAVKAQINDCFITTGERPLVFHSIVKPEIRDVIYSSEGLDYDFLNTFVAPLEKQLGIAATPAMHRTHGKANEGYEARIDAINYAMENDDGQTMKHMDKADLILLGVSRCGKTPSSLYLSMQFGIKAANYPFTEDDMDNLKLPDALKRNKGKLFGLTIDPERLHEIRHSRMSNSRYSSLRQCRMEVKEVEMMYQKERIPFVNTTNHSVEEIATKILEITGLKRHMF.

150-157 lines the ADP pocket; the sequence is GVSRCGKT.

The protein belongs to the pyruvate, phosphate/water dikinase regulatory protein family. PSRP subfamily.

The catalysed reaction is [pyruvate, water dikinase] + ADP = [pyruvate, water dikinase]-phosphate + AMP + H(+). It carries out the reaction [pyruvate, water dikinase]-phosphate + phosphate + H(+) = [pyruvate, water dikinase] + diphosphate. In terms of biological role, bifunctional serine/threonine kinase and phosphorylase involved in the regulation of the phosphoenolpyruvate synthase (PEPS) by catalyzing its phosphorylation/dephosphorylation. The protein is Putative phosphoenolpyruvate synthase regulatory protein of Shewanella halifaxensis (strain HAW-EB4).